Reading from the N-terminus, the 98-residue chain is Small ribosomal subunit protein eS24 (98 aa).

The protein belongs to the eukaryotic ribosomal protein eS24 family.

In Thermococcus gammatolerans (strain DSM 15229 / JCM 11827 / EJ3), this protein is Small ribosomal subunit protein eS24.